The following is a 1474-amino-acid chain: Alpha-2-macroglobulin-P (1474 aa).

The first 32 residues, 1-32 (MGKRWLPSLALLPLPPPLLLLLLLLLPTNASA), serve as a signal peptide directing secretion. Cysteines 55 and 93 form a disulfide. Asn62, Asn77, and Asn253 each carry an N-linked (GlcNAc...) asparagine glycan. Intrachain disulfides connect Cys257–Cys305 and Cys275–Cys293. N-linked (GlcNAc...) asparagine glycosylation is present at Asn402. Disulfide bonds link Cys476/Cys569, Cys601/Cys771, and Cys650/Cys697. Positions 623 to 752 (LVYDLLPVKD…LVIVDSTGVA (130 aa)) are bait region. Residues Asn654 and Asn774 are each glycosylated (N-linked (GlcNAc...) asparagine). Intrachain disulfides connect Cys821/Cys849, Cys847/Cys883, Cys921/Cys1321, Cys1079/Cys1127, and Cys1352/Cys1467. The N-linked (GlcNAc...) asparagine glycan is linked to Asn869. Residues 972–975 (CGEQ) constitute a cross-link (isoglutamyl cysteine thioester (Cys-Gln)). An N-linked (GlcNAc...) asparagine glycan is attached at Asn991. Asn1366 carries N-linked (GlcNAc...) asparagine glycosylation.

Belongs to the protease inhibitor I39 (alpha-2-macroglobulin) family. As to quaternary structure, homotetramer; disulfide-linked. In terms of tissue distribution, expressed in uterus, mesometrial lymphoid aggregate and mammary tissue during pregnancy. Expressed in ovary, testis and kidney. Low level expression in heart. Not expressed in liver.

Its subcellular location is the secreted. Is able to inhibit all four classes of proteinases by a unique 'trapping' mechanism. This protein has a peptide stretch, called the 'bait region' which contains specific cleavage sites for different proteinases. When a proteinase cleaves the bait region, a conformational change is induced in the protein which traps the proteinase. The entrapped enzyme remains active against low molecular weight substrates (activity against high molecular weight substrates is greatly reduced). Following cleavage in the bait region a thioester bond is hydrolyzed and mediates the covalent binding of the protein to the proteinase. The chain is Alpha-2-macroglobulin-P from Mus musculus (Mouse).